Consider the following 466-residue polypeptide: UDP-N-acetylmuramoylalanine--D-glutamate ligase (466 aa).

Residue 128–134 (GTNGKST) participates in ATP binding.

It belongs to the MurCDEF family.

Its subcellular location is the cytoplasm. It catalyses the reaction UDP-N-acetyl-alpha-D-muramoyl-L-alanine + D-glutamate + ATP = UDP-N-acetyl-alpha-D-muramoyl-L-alanyl-D-glutamate + ADP + phosphate + H(+). Its pathway is cell wall biogenesis; peptidoglycan biosynthesis. Functionally, cell wall formation. Catalyzes the addition of glutamate to the nucleotide precursor UDP-N-acetylmuramoyl-L-alanine (UMA). The sequence is that of UDP-N-acetylmuramoylalanine--D-glutamate ligase from Bartonella henselae (strain ATCC 49882 / DSM 28221 / CCUG 30454 / Houston 1) (Rochalimaea henselae).